We begin with the raw amino-acid sequence, 229 residues long: Lipoprotein-releasing system ATP-binding protein LolD (229 aa).

The ABC transporter domain maps to 7–229 (LKCKNVTKTY…KNGKLYKKNL (223 aa)). Position 43–50 (43–50 (GDSGSGKS)) interacts with ATP.

It belongs to the ABC transporter superfamily. Lipoprotein translocase (TC 3.A.1.125) family. In terms of assembly, the complex is composed of two ATP-binding proteins (LolD) and two transmembrane proteins (LolC and LolE).

It is found in the cell membrane. Part of the ABC transporter complex LolCDE involved in the translocation of lipoproteins, in an ATP-dependent manner. The sequence is that of Lipoprotein-releasing system ATP-binding protein LolD from Wigglesworthia glossinidia brevipalpis.